The primary structure comprises 426 residues: Serine hydroxymethyltransferase (426 aa).

Residues Leu118 and 122-124 (GHL) each bind (6S)-5,6,7,8-tetrahydrofolate. Position 227 is an N6-(pyridoxal phosphate)lysine (Lys227).

The protein belongs to the SHMT family. Homodimer. Requires pyridoxal 5'-phosphate as cofactor.

Its subcellular location is the cytoplasm. It catalyses the reaction (6R)-5,10-methylene-5,6,7,8-tetrahydrofolate + glycine + H2O = (6S)-5,6,7,8-tetrahydrofolate + L-serine. It functions in the pathway one-carbon metabolism; tetrahydrofolate interconversion. The protein operates within amino-acid biosynthesis; glycine biosynthesis; glycine from L-serine: step 1/1. In terms of biological role, catalyzes the reversible interconversion of serine and glycine with tetrahydrofolate (THF) serving as the one-carbon carrier. This reaction serves as the major source of one-carbon groups required for the biosynthesis of purines, thymidylate, methionine, and other important biomolecules. Also exhibits THF-independent aldolase activity toward beta-hydroxyamino acids, producing glycine and aldehydes, via a retro-aldol mechanism. The protein is Serine hydroxymethyltransferase of Mycobacterium avium (strain 104).